Here is a 209-residue protein sequence, read N- to C-terminus: Adenylate kinase (209 aa).

An ATP-binding site is contributed by 10–15 (GAGKGT). The interval 30–59 (STGDLFRAAIKEQTDLGKKVKAVIDSGALV) is NMP. Residues threonine 31, arginine 36, 57-59 (ALV), 85-88 (GFPR), and glutamine 92 each bind AMP. An LID region spans residues 121 to 158 (GRRVCSSCGQSFHIEFVKPKKEGICDSCSGDLMIRPDD). Arginine 122 is an ATP binding site. Positions 125 and 128 each coordinate Zn(2+). 131–132 (SF) lines the ATP pocket. Residues cysteine 145 and cysteine 148 each contribute to the Zn(2+) site. The AMP site is built by arginine 155 and arginine 166. Proline 194 is an ATP binding site.

This sequence belongs to the adenylate kinase family. Monomer.

Its subcellular location is the cytoplasm. The catalysed reaction is AMP + ATP = 2 ADP. It functions in the pathway purine metabolism; AMP biosynthesis via salvage pathway; AMP from ADP: step 1/1. Its function is as follows. Catalyzes the reversible transfer of the terminal phosphate group between ATP and AMP. Plays an important role in cellular energy homeostasis and in adenine nucleotide metabolism. The chain is Adenylate kinase from Treponema denticola (strain ATCC 35405 / DSM 14222 / CIP 103919 / JCM 8153 / KCTC 15104).